Consider the following 685-residue polypeptide: tRNA 5-methylaminomethyl-2-thiouridine biosynthesis bifunctional protein MnmC (685 aa).

The tRNA (mnm(5)s(2)U34)-methyltransferase stretch occupies residues 1–272 (MTAEPNKPCQ…MAAILSSATQ (272 aa)). The segment at 278 to 685 (IGGGLASAHL…LRKLLKGKAL (408 aa)) is FAD-dependent cmnm(5)s(2)U34 oxidoreductase.

This sequence in the N-terminal section; belongs to the methyltransferase superfamily. tRNA (mnm(5)s(2)U34)-methyltransferase family. In the C-terminal section; belongs to the DAO family. Requires FAD as cofactor.

It is found in the cytoplasm. The catalysed reaction is 5-aminomethyl-2-thiouridine(34) in tRNA + S-adenosyl-L-methionine = 5-methylaminomethyl-2-thiouridine(34) in tRNA + S-adenosyl-L-homocysteine + H(+). In terms of biological role, catalyzes the last two steps in the biosynthesis of 5-methylaminomethyl-2-thiouridine (mnm(5)s(2)U) at the wobble position (U34) in tRNA. Catalyzes the FAD-dependent demodification of cmnm(5)s(2)U34 to nm(5)s(2)U34, followed by the transfer of a methyl group from S-adenosyl-L-methionine to nm(5)s(2)U34, to form mnm(5)s(2)U34. This is tRNA 5-methylaminomethyl-2-thiouridine biosynthesis bifunctional protein MnmC from Shewanella baltica (strain OS185).